Consider the following 431-residue polypeptide: Serine--tRNA ligase (431 aa).

237-239 (TAE) contributes to the L-serine binding site. 268–270 (RSE) serves as a coordination point for ATP. E291 serves as a coordination point for L-serine. ATP is bound at residue 355 to 358 (EISS). S390 lines the L-serine pocket.

Belongs to the class-II aminoacyl-tRNA synthetase family. Type-1 seryl-tRNA synthetase subfamily. Homodimer. The tRNA molecule binds across the dimer.

It localises to the cytoplasm. The catalysed reaction is tRNA(Ser) + L-serine + ATP = L-seryl-tRNA(Ser) + AMP + diphosphate + H(+). The enzyme catalyses tRNA(Sec) + L-serine + ATP = L-seryl-tRNA(Sec) + AMP + diphosphate + H(+). The protein operates within aminoacyl-tRNA biosynthesis; selenocysteinyl-tRNA(Sec) biosynthesis; L-seryl-tRNA(Sec) from L-serine and tRNA(Sec): step 1/1. Its function is as follows. Catalyzes the attachment of serine to tRNA(Ser). Is also able to aminoacylate tRNA(Sec) with serine, to form the misacylated tRNA L-seryl-tRNA(Sec), which will be further converted into selenocysteinyl-tRNA(Sec). This Neisseria meningitidis serogroup C (strain 053442) protein is Serine--tRNA ligase.